The sequence spans 518 residues: Cytochrome P450 monooxygenase pyr3 (518 aa).

A helical transmembrane segment spans residues 26–46; it reads GVAIVLFLAPLALHLVSSYLF. Cys-458 contacts heme.

The protein belongs to the cytochrome P450 family. The cofactor is heme.

It localises to the membrane. It participates in secondary metabolite biosynthesis; terpenoid biosynthesis. Functionally, cytochrome P450 monooxygenase; part of the gene cluster that mediates the biosynthesis of pyripyropene A, a specific human acyl-coenzyme A:cholesterol acyltransferase 2 inhibitor. The first step of the pathway is the synthesis of nicotinyl-CoA from nicotinic acid by the nicotinic acid-CoA ligase pyr1. Nicotinyl-CoA is then a substrate of polyketide synthase pyr2 to produce 4-hydroxy-6-(3-pyridinyl)-2H-pyran-2-one (HPPO) which is further prenylated by the polyprenyl transferase pyr6 to yield farnesyl-HPPO. The next steps consist of an epoxidation of farnesyl-HPPO to epoxyfarnesyl-HPPO by FAD-dependent monooxygenase pyr5 and a cyclization of the terpenoid portion by the terpene cyclase pyr4 to yield deacetyl-pyripyropene E. The 2 cytochrome P450 monooxygenases pyr3 and pyr9, and the 2 acetyltransferases pyr7 and pyr8 are involved in the conversion of deacetyl-pyripyropene E into pyripyropene A through several cycles of oxidation and acetylation steps. Pyr7 acetylates deacetyl-pyripyropene E to pyripyropene E which is oxidized to 11-deacetyl-pyripyropene O by pyr3, which is in turn acetylated into pyripyropene O by pyr8. Pyripyropene O is then oxidized to deacetyl-pyripyropene A by pyr9. Deacetyl-pyripyropene A is finally acetylated to pyripyropene A by pyr8. This chain is Cytochrome P450 monooxygenase pyr3, found in Aspergillus fumigatus (strain ATCC MYA-4609 / CBS 101355 / FGSC A1100 / Af293) (Neosartorya fumigata).